Consider the following 353-residue polypeptide: tRNA N6-adenosine threonylcarbamoyltransferase (353 aa).

2 residues coordinate Fe cation: His109 and His113. Substrate is bound by residues Thr136–Gly140, Asp169, Gly182, Asp186, and Asn284. Asp312 provides a ligand contact to Fe cation.

Belongs to the KAE1 / TsaD family. Requires Fe(2+) as cofactor.

The protein resides in the cytoplasm. The catalysed reaction is L-threonylcarbamoyladenylate + adenosine(37) in tRNA = N(6)-L-threonylcarbamoyladenosine(37) in tRNA + AMP + H(+). Its function is as follows. Required for the formation of a threonylcarbamoyl group on adenosine at position 37 (t(6)A37) in tRNAs that read codons beginning with adenine. Is involved in the transfer of the threonylcarbamoyl moiety of threonylcarbamoyl-AMP (TC-AMP) to the N6 group of A37, together with TsaE and TsaB. TsaD likely plays a direct catalytic role in this reaction. The sequence is that of tRNA N6-adenosine threonylcarbamoyltransferase from Chlorobaculum tepidum (strain ATCC 49652 / DSM 12025 / NBRC 103806 / TLS) (Chlorobium tepidum).